The sequence spans 209 residues: Uracil phosphoribosyltransferase (209 aa).

Residues Arg79, Arg104, and 131 to 139 (DPMLATGGS) each bind 5-phospho-alpha-D-ribose 1-diphosphate. Uracil is bound by residues Val194 and 199–201 (GDA). Asp200 contacts 5-phospho-alpha-D-ribose 1-diphosphate.

Belongs to the UPRTase family. Requires Mg(2+) as cofactor.

It carries out the reaction UMP + diphosphate = 5-phospho-alpha-D-ribose 1-diphosphate + uracil. Its pathway is pyrimidine metabolism; UMP biosynthesis via salvage pathway; UMP from uracil: step 1/1. Allosterically activated by GTP. Its function is as follows. Catalyzes the conversion of uracil and 5-phospho-alpha-D-ribose 1-diphosphate (PRPP) to UMP and diphosphate. This chain is Uracil phosphoribosyltransferase, found in Bacillus cereus (strain Q1).